Consider the following 331-residue polypeptide: Probable cyclic nucleotide synthase IK1_05630 (331 aa).

Belongs to the CD-NTase family. D12 subfamily.

Functionally, cyclic nucleotide synthase (second messenger synthase) of a CBASS antivirus system. CBASS (cyclic oligonucleotide-based antiphage signaling system) provides immunity against bacteriophage. The CD-NTase protein synthesizes cyclic nucleotides in response to infection; these serve as specific second messenger signals. The signals activate a diverse range of effectors, leading to bacterial cell death and thus abortive phage infection. A type I-B CBASS system. Probably a cyclic nucleotide synthase that makes second messenger nucleotide which activates a CBASS antiviral defense system. Its function is as follows. Protects B.subtilis against phage infection. When IK1_05630 and IK1_05631 are introduced in B.subtilis BEST7003 there is 1000-fold protection against phage SBSphiC. Both genes are required for protection. Activation leads to bacterial cell lysis and death, which occurs before the phage has finished its replication cycle, thus protecting non-infected bacteria by aborting the phage infection and preventing its propagation. This chain is Probable cyclic nucleotide synthase IK1_05630, found in Bacillus cereus (strain VD146).